The sequence spans 380 residues: Cytosolic acyl coenzyme A thioester hydrolase (380 aa).

Residues 50-168 (PCGACITGRI…TLWYVPLSLK (119 aa)) enclose the HotDog ACOT-type 1 domain. Asparagine 66 is an active-site residue. Lysine 168 and lysine 198 each carry N6-acetyllysine. Positions 224 to 338 (SYSQSSLIHL…FFTYVSLSQE (115 aa)) constitute a HotDog ACOT-type 2 domain. Aspartate 255 is an active-site residue. Position 283 is an N6-acetyllysine (lysine 283). The interval 350–380 (ETEDEKKRFEEGKGRYLQMKAKRQGHAEPQP) is disordered. The segment covering 353 to 363 (DEKKRFEEGKG) has biased composition (basic and acidic residues).

Homohexamer. As to expression, isoform 4 is expressed exclusively in brain.

It is found in the cytoplasm. It localises to the cytosol. The protein localises to the mitochondrion. It carries out the reaction hexadecanoyl-CoA + H2O = hexadecanoate + CoA + H(+). The enzyme catalyses octanoyl-CoA + H2O = octanoate + CoA + H(+). The catalysed reaction is dodecanoyl-CoA + H2O = dodecanoate + CoA + H(+). It catalyses the reaction (9Z)-octadecenoyl-CoA + H2O = (9Z)-octadecenoate + CoA + H(+). It carries out the reaction tetradecanoyl-CoA + H2O = tetradecanoate + CoA + H(+). The enzyme catalyses decanoyl-CoA + H2O = decanoate + CoA + H(+). The catalysed reaction is octadecanoyl-CoA + H2O = octadecanoate + CoA + H(+). It participates in lipid metabolism; fatty acid metabolism. In terms of biological role, catalyzes the hydrolysis of acyl-CoAs into free fatty acids and coenzyme A (CoASH), regulating their respective intracellular levels. Preferentially hydrolyzes palmitoyl-CoA, but has a broad specificity acting on other fatty acyl-CoAs with chain-lengths of C8-C18. May play an important physiological function in brain. The protein is Cytosolic acyl coenzyme A thioester hydrolase (ACOT7) of Homo sapiens (Human).